A 302-amino-acid chain; its full sequence is MTNISLDKLVTESRNENTKNIDRVETLEMLKMINNEDKKVAEAVEKELIHIAKAVDKIGEAFLNGGRLIYVGAGTSGRLGVLDASECPPTYGVSYDLVRGIIAGGESAMFKAREGAEDSKKLCIKDLKNINFGKNDILAGIAASGRTPYVIGGLEYANGIGATTISVTCNPESEMSKIANISIAPVVGPEAITGSTRMKAGTAQKMVLNMLSTGAMVKTGKVYGNLMVDLKATNEKLVERAKRIVMQATGSKREQVEKILKETNFDVKLSIFMIESSLDKIKAKEILDKNKGYIVEAIKEIS.

Positions 58-221 (IGEAFLNGGR…STGAMVKTGK (164 aa)) constitute an SIS domain. The active-site Proton donor is the E86. E117 is a catalytic residue.

Belongs to the GCKR-like family. MurNAc-6-P etherase subfamily. Homodimer.

It catalyses the reaction N-acetyl-D-muramate 6-phosphate + H2O = N-acetyl-D-glucosamine 6-phosphate + (R)-lactate. The protein operates within amino-sugar metabolism; N-acetylmuramate degradation. In terms of biological role, specifically catalyzes the cleavage of the D-lactyl ether substituent of MurNAc 6-phosphate, producing GlcNAc 6-phosphate and D-lactate. The chain is N-acetylmuramic acid 6-phosphate etherase from Clostridium botulinum (strain Hall / ATCC 3502 / NCTC 13319 / Type A).